The sequence spans 157 residues: 3-hydroxyacyl-[acyl-carrier-protein] dehydratase FabZ (157 aa).

The active site involves His58.

It belongs to the thioester dehydratase family. FabZ subfamily.

The protein localises to the cytoplasm. It catalyses the reaction a (3R)-hydroxyacyl-[ACP] = a (2E)-enoyl-[ACP] + H2O. Functionally, involved in unsaturated fatty acids biosynthesis. Catalyzes the dehydration of short chain beta-hydroxyacyl-ACPs and long chain saturated and unsaturated beta-hydroxyacyl-ACPs. The protein is 3-hydroxyacyl-[acyl-carrier-protein] dehydratase FabZ of Rhizorhabdus wittichii (strain DSM 6014 / CCUG 31198 / JCM 15750 / NBRC 105917 / EY 4224 / RW1) (Sphingomonas wittichii).